Here is a 242-residue protein sequence, read N- to C-terminus: ATP synthase subunit a (242 aa).

The next 6 membrane-spanning stretches (helical) occupy residues 29–49 (SSIYMLLASILALTYFYLAFY), 84–104 (FIPLVFSLFIFILFCNLLGMT), 114–134 (IIVTFTLAILVFLTVTIVGFV), 140–160 (FLTLFLPHGTPLWLAPLMIVI), 189–209 (VIAGFTVSLMIYLKFLPIPLM), and 210–230 (MILIGFEIFVAILQAYIFTIL).

The protein belongs to the ATPase A chain family. In terms of assembly, F-type ATPases have 2 components, CF(1) - the catalytic core - and CF(0) - the membrane proton channel. CF(1) has five subunits: alpha(3), beta(3), gamma(1), delta(1), epsilon(1). CF(0) has three main subunits: a(1), b(2) and c(9-12). The alpha and beta chains form an alternating ring which encloses part of the gamma chain. CF(1) is attached to CF(0) by a central stalk formed by the gamma and epsilon chains, while a peripheral stalk is formed by the delta and b chains.

It is found in the cell inner membrane. In terms of biological role, key component of the proton channel; it plays a direct role in the translocation of protons across the membrane. In Rickettsia massiliae (strain Mtu5), this protein is ATP synthase subunit a.